A 588-amino-acid chain; its full sequence is Adenine deaminase (588 aa).

Belongs to the metallo-dependent hydrolases superfamily. Adenine deaminase family. Homodimer. Mn(2+) is required as a cofactor.

The catalysed reaction is adenine + H2O + H(+) = hypoxanthine + NH4(+). The chain is Adenine deaminase from Escherichia coli (strain K12 / DH10B).